Consider the following 288-residue polypeptide: Homoserine kinase (288 aa).

Position 79 to 89 (79 to 89 (PLARGLGSSSS)) interacts with ATP.

It belongs to the GHMP kinase family. Homoserine kinase subfamily.

Its subcellular location is the cytoplasm. The catalysed reaction is L-homoserine + ATP = O-phospho-L-homoserine + ADP + H(+). Its pathway is amino-acid biosynthesis; L-threonine biosynthesis; L-threonine from L-aspartate: step 4/5. Functionally, catalyzes the ATP-dependent phosphorylation of L-homoserine to L-homoserine phosphate. In Streptococcus gordonii (strain Challis / ATCC 35105 / BCRC 15272 / CH1 / DL1 / V288), this protein is Homoserine kinase.